Reading from the N-terminus, the 590-residue chain is Protein phosphatase PP2A regulatory subunit A (590 aa).

11 HEAT repeats span residues 12 to 50 (PIAV…TRDE), 89 to 127 (LLSP…LEQY), 206 to 244 (FIPL…EIRH), 246 to 284 (LLQP…IKDE), 285 to 323 (LIKP…VLEE), 324 to 362 (IIPV…TTEY), 363 to 401 (LLPM…LSQS), 402 to 440 (LLPA…FNEK), 480 to 518 (IIPK…IEKQ), 519 to 551 (ILPT…VLAA), and 562 to 590 (IIPL…QTND).

This sequence belongs to the phosphatase 2A regulatory subunit A family. As to quaternary structure, PP2A exists in several trimeric forms, all of which consist of a core composed of a catalytic subunit associated with a 65 kDa (PR65) (Subunit A) and a 55 kDa (PR55) (Subunit B) regulatory subunit.

Its function is as follows. Phosphatase 2A affects a variety of biological processes in the cell such as transcription, cell cycle progression and cellular morphogenesis, and provides an initial identification of critical substrates for this phosphatase. The regulatory subunit may direct the catalytic subunit to distinct, albeit overlapping, subsets of substrates. The polypeptide is Protein phosphatase PP2A regulatory subunit A (paa1) (Schizosaccharomyces pombe (strain 972 / ATCC 24843) (Fission yeast)).